A 60-amino-acid polypeptide reads, in one-letter code: Conotoxin Cal6.30 (60 aa).

A signal peptide spans 1-22; the sequence is MKVTCVLTLAVLILTIGQIANA. Disulfide bonds link C31–C47, C38–C51, and C46–C55.

Expressed by the venom duct.

The protein localises to the secreted. Functionally, probable neurotoxin. This Californiconus californicus (California cone) protein is Conotoxin Cal6.30.